Here is a 553-residue protein sequence, read N- to C-terminus: MSEEQNLRPVYDDDQPGEDTYKRGAIYKQTRSRKADYEDGENSEKRQKPNDTDNGPTAVVTDLSNEKKETRSKDKDESVALAVDADGNPIPQEVRLPKRKVAVMIGYCGTGYHGMQYNPPNDTIEKELFEAFVRAGAISKANSTDLKKNGFQRAARTDKGVHAGGNVISLKLIIEDPEVKEKINNELPDQIRVWDISRVNKAFDCRKMCSSRWYEYLLPTYSLIGPKPSTYLYNEIEASKKEIPNVIQDDVESAQFWEAFSTEAESKFTKEELEEIAAFVMPKDSFDENNETYQKSKAFKKLEAEHKRAYRISKERLDRFRSALKQYEGTFNFHNFTLGKDFNDPSAKRFMKQITVSEPFVIGEAKTEWVSIKIHGQSFMLHQIRKMISMATLITRCFSPLERIRQAYGQEKINIPKAPALGLLLEAPVYDGYNTRLQEFGYDPIDFSKYQSEMDTFKMKHIYDKIYLEEVNENVFNAFFSYIDTFNPSYNISQEQQQLKGQELQQPSQAVELVTEDLEQKAPSDPTPSDEKGKKPQRPIFDFLTARGIQLQD.

Positions 1 to 78 are disordered; it reads MSEEQNLRPV…ETRSKDKDES (78 aa). Basic and acidic residues-rich tracts occupy residues 33-51 and 64-78; these read RKAD…KPND and SNEK…KDES. Asp158 (nucleophile) is an active-site residue. The segment at 517–539 is disordered; it reads DLEQKAPSDPTPSDEKGKKPQRP.

The protein belongs to the tRNA pseudouridine synthase TruA family. Zn(2+) is required as a cofactor.

The protein localises to the nucleus. It catalyses the reaction a uridine in tRNA = a pseudouridine in tRNA. It carries out the reaction uridine in snRNA = pseudouridine in snRNA. The enzyme catalyses a uridine in mRNA = a pseudouridine in mRNA. Its function is as follows. Formation of pseudouridine at positions 27 and 28 in the anticodon stem and loop of transfer RNAs; at positions 34 and 36 of intron-containing precursor tRNA(Ile) and at position 35 in the intron-containing tRNA(Tyr). Catalyzes pseudouridylation at position 44 in U2 snRNA. Also catalyzes pseudouridylation of mRNAs. The protein is tRNA pseudouridine synthase 1 (PUS1) of Kluyveromyces lactis (strain ATCC 8585 / CBS 2359 / DSM 70799 / NBRC 1267 / NRRL Y-1140 / WM37) (Yeast).